A 286-amino-acid chain; its full sequence is Undecaprenyl-diphosphatase (286 aa).

8 consecutive transmembrane segments (helical) span residues 17-37 (VVLG…TAHL), 49-69 (PGVA…IGYF), 98-118 (IAIA…KLFW), 126-146 (LRSV…LALA), 159-179 (VQGL…IPGV), 204-224 (FLLG…GAFA), 232-252 (LPML…IAWL), and 261-281 (TWPF…LVLA).

It belongs to the UppP family.

The protein resides in the cell inner membrane. It catalyses the reaction di-trans,octa-cis-undecaprenyl diphosphate + H2O = di-trans,octa-cis-undecaprenyl phosphate + phosphate + H(+). In terms of biological role, catalyzes the dephosphorylation of undecaprenyl diphosphate (UPP). Confers resistance to bacitracin. The protein is Undecaprenyl-diphosphatase of Synechococcus sp. (strain RCC307).